The following is a 546-amino-acid chain: Protein RDR1 (546 aa).

Positions 20-46 (CVPCRERKRKCNGKSPCEMCVAYGYVC) form a DNA-binding region, zn(2)-C6 fungal-type.

It is found in the nucleus. Its function is as follows. Transcriptional repressor of multidrug resistance genes, such as PDR5. Required for growth on non-fermentable carbon sources like lactate or glycerol. The sequence is that of Protein RDR1 (RDR1) from Saccharomyces cerevisiae (strain ATCC 204508 / S288c) (Baker's yeast).